The sequence spans 399 residues: Integral membrane protein GPR137B (399 aa).

The disordered stretch occupies residues 1 to 22; sequence MRPERPRPRGSAPGPMETPPWD. Residues 1–46 lie on the Lumenal side of the membrane; it reads MRPERPRPRGSAPGPMETPPWDPARNDSLPPTLTPAVPPYVKLGLT. An N-linked (GlcNAc...) asparagine glycan is attached at Asn-26. Residues 47–67 form a helical membrane-spanning segment; sequence VVYTVFYALLFVFIYVQLWLV. Residues 68–79 are Cytoplasmic-facing; the sequence is LRYRHKRLSYQS. A helical membrane pass occupies residues 80–100; that stretch reads VFLFLCLFWASLRTVLFSFYF. Residues 101-111 lie on the Lumenal side of the membrane; the sequence is KDFVAANSLSP. A helical transmembrane segment spans residues 112-132; the sequence is FVFWLLYCFPVCLQFFTLTLM. Residues 133–159 are Cytoplasmic-facing; that stretch reads NLYFTQVIFKAKSKYSPELLKYRLPLY. A helical membrane pass occupies residues 160–180; it reads LASLFISLVFLLVNLTCAVLV. Topologically, residues 181–188 are lumenal; the sequence is KTGNWERK. A helical transmembrane segment spans residues 189–209; that stretch reads VIVSVRVAINDTLFVLCAVSL. The Cytoplasmic segment spans residues 210–237; it reads SICLYKISKMSLANIYLESKGSSVCQVT. The chain crosses the membrane as a helical span at residues 238-258; that stretch reads AIGVTVILLYTSRACYNLFIL. Over 259–292 the chain is Lumenal; sequence SFSQNKSVHSFDYDWYNVSDQADLKNQLGDAGYV. N-linked (GlcNAc...) asparagine glycosylation is found at Asn-263 and Asn-275. Residues 293 to 313 form a helical membrane-spanning segment; that stretch reads LFGVVLFVWELLPTTLVVYFF. Over 314-399 the chain is Cytoplasmic; the sequence is RVRNPTKDLT…TLDPDKPSLG (86 aa).

Belongs to the GPR137 family. As to quaternary structure, interaction with RRAGA; increases RRAGA recruitment to lysosomes. Interacts with MTOR; this interaction is amino acid sensitive. In terms of tissue distribution, expressed in kidney, heart, brain and placenta.

Its subcellular location is the lysosome membrane. Functionally, lysosomal integral membrane protein that regulates the localization and activity of mTORC1, a signaling complex promoting cell growth in response to growth factors, energy levels, and amino acids. Interacts with Rag GTPases and increases the lysosomial localization and activity of Rag GTPases and thereby regulates mTORC1 translocation and activity in lysosome. Involved in the regulation of lysosomal morphology and autophagy. Its function is as follows. Also acts as a negative regulator of osteoclast activity. Involved in interleukin-4-induced M2 macrophage polarization. This is Integral membrane protein GPR137B (GPR137B) from Homo sapiens (Human).